The chain runs to 239 residues: Endolytic peptidoglycan transglycosylase RlpA (239 aa).

Positions 1–25 (MTLTRKTLFLLTAAFGIHSFQTASA) are cleaved as a signal peptide. In terms of domain architecture, SPOR spans 160–239 (VAENKDIFID…GMVRAVLTAG (80 aa)).

This sequence belongs to the RlpA family.

Functionally, lytic transglycosylase with a strong preference for naked glycan strands that lack stem peptides. This is Endolytic peptidoglycan transglycosylase RlpA from Neisseria meningitidis serogroup A / serotype 4A (strain DSM 15465 / Z2491).